A 292-amino-acid chain; its full sequence is Histamine N-methyltransferase (292 aa).

E28 is a binding site for substrate. 5 residues coordinate S-adenosyl-L-methionine: G60, E89, Q94, S120, and I142. Substrate is bound at residue N283.

The protein belongs to the class I-like SAM-binding methyltransferase superfamily. HNMT family. Monomer.

It localises to the cytoplasm. The enzyme catalyses histamine + S-adenosyl-L-methionine = N(tau)-methylhistamine + S-adenosyl-L-homocysteine + H(+). In terms of biological role, inactivates histamine by N-methylation. Plays an important role in degrading histamine and in regulating the airway response to histamine. The protein is Histamine N-methyltransferase (HNMT) of Pongo abelii (Sumatran orangutan).